Consider the following 811-residue polypeptide: Ribonucleoside-diphosphate reductase large chain (811 aa).

An ATP-cone domain is found at 1–92 (MFVYKRDGRQ…VSNLHKQTEK (92 aa)). Residues 5–6 (KR), 11–17 (EKVAFDK), Thr53, and Asp57 each bind ATP. Positions 202 and 217 each coordinate GDP. A disulfide bridge connects residues Cys218 and Cys444. Residues 226–228 (DSI), Lys243, Arg256, and 263–264 (AG) contribute to the dTTP site. Residue Asn427 coordinates GDP. Catalysis depends on Asn427, which acts as the Proton acceptor. The Cysteine radical intermediate role is filled by Cys429. GDP contacts are provided by residues Glu431 and 603-606 (TAST). The Proton acceptor role is filled by Glu431.

This sequence belongs to the ribonucleoside diphosphate reductase large chain family. Heterodimer of a large and a small subunit. Interacts with SPD1.

The catalysed reaction is a 2'-deoxyribonucleoside 5'-diphosphate + [thioredoxin]-disulfide + H2O = a ribonucleoside 5'-diphosphate + [thioredoxin]-dithiol. With respect to regulation, under complex allosteric control mediated by deoxynucleoside triphosphates and ATP binding to separate specificity and activation sites on the large subunit. The type of nucleotide bound at the specificity site determines substrate preference. It seems probable that ATP makes the enzyme reduce CDP and UDP, dGTP favors ADP reduction and dTTP favors GDP reduction. Stimulated by ATP and inhibited by dATP binding to the activity site. Functionally, provides the precursors necessary for DNA synthesis. Catalyzes the biosynthesis of deoxyribonucleotides from the corresponding ribonucleotides. The chain is Ribonucleoside-diphosphate reductase large chain (cdc22) from Schizosaccharomyces pombe (strain 972 / ATCC 24843) (Fission yeast).